The primary structure comprises 679 residues: Oxidant-induced cell-cycle arrest protein 5 (679 aa).

The Rab-GAP TBC domain maps to 50 to 441 (GVPPQLRHVV…RVWDLLLGWR (392 aa)). Over residues 135–153 (NPAGSSSNANTTNIATPTP) the composition is skewed to low complexity. Disordered stretches follow at residues 135–159 (NPAG…SSDA), 250–271 (TNNG…NNTN), and 524–544 (QSKA…NDKS). Positions 524–539 (QSKAQKDNTVPSPGSD) are enriched in polar residues.

It belongs to the OCA5 family.

Its subcellular location is the cytoplasm. In terms of biological role, required for replication of brome mosaic virus (BMV), a positive-strand RNA virus. The chain is Oxidant-induced cell-cycle arrest protein 5 (OCA5) from Saccharomyces cerevisiae (strain Lalvin EC1118 / Prise de mousse) (Baker's yeast).